We begin with the raw amino-acid sequence, 141 residues long: UPF0310 protein SSA_0254 (141 aa).

This sequence belongs to the UPF0310 family.

The chain is UPF0310 protein SSA_0254 from Streptococcus sanguinis (strain SK36).